Consider the following 142-residue polypeptide: RNA-directed DNA polymerase homolog (142 aa).

The protein localises to the mitochondrion. The enzyme catalyses RNA(n) + a ribonucleoside 5'-triphosphate = RNA(n+1) + diphosphate. The protein is RNA-directed DNA polymerase homolog of Oenothera berteroana (Bertero's evening primrose).